The sequence spans 283 residues: Agmatinase (283 aa).

A divalent metal cation is bound by residues His112, Asp131, His133, Asp135, Asp211, and Asp213.

Belongs to the arginase family. Agmatinase subfamily. In terms of assembly, homotetramer. A divalent metal cation serves as cofactor.

It carries out the reaction agmatine + H2O = urea + putrescine. It functions in the pathway amine and polyamine biosynthesis; putrescine biosynthesis via agmatine pathway; putrescine from agmatine: step 1/1. With respect to regulation, inhibited by putrescine. Activity is not affected by arginine and ornithine. Its function is as follows. Catalyzes the formation of putrescine from agmatine. Cannot use arginine. The sequence is that of Agmatinase from Pyrococcus horikoshii (strain ATCC 700860 / DSM 12428 / JCM 9974 / NBRC 100139 / OT-3).